The following is a 794-amino-acid chain: Putative neurotrophin receptor LTRK 1 (794 aa).

The first 33 residues, 1-33 (MRGPRRFRLWTRANVLTVISILTSILSGAGCSP), serve as a signal peptide directing secretion. Over 34–419 (LSQLPSDNPA…PTEDFGPQTQ (386 aa)) the chain is Extracellular. Residues 36-102 (QLPSDNPAHV…DQVPGDASRN (67 aa)) form a disordered region. Residues N64, N102, and N128 are each glycosylated (N-linked (GlcNAc...) asparagine). LRR repeat units follow at residues 181–202 (CLKH…AFKT) and 205–226 (SLET…LLRT). Residues 237–280 (NALTCSCTNLWLRSVDVAADRSEMTCSTRDGVSKMKMTQFKCEP) form the LRRCT domain. N288 and N374 each carry an N-linked (GlcNAc...) asparagine glycan. A helical membrane pass occupies residues 420–440 (VILPVVGVVILLISAVFIIYL). Topologically, residues 441-794 (CQRAKHRSHA…GDPVYIDIIA (354 aa)) are cytoplasmic. Residues 504–775 (ILLMRVIGEG…PQDRLTMKDI (272 aa)) form the Protein kinase domain. ATP is bound by residues 510 to 518 (IGEGAFGRV) and K538. D647 acts as the Proton acceptor in catalysis. Y673, Y677, Y678, and Y789 each carry phosphotyrosine; by autocatalysis.

The protein belongs to the protein kinase superfamily. Tyr protein kinase family. Insulin receptor subfamily. In terms of tissue distribution, expression is confined to the central nervous system and its associated endocrine tissues.

It localises to the membrane. The enzyme catalyses L-tyrosyl-[protein] + ATP = O-phospho-L-tyrosyl-[protein] + ADP + H(+). Its function is as follows. May bind an endogenous invertebrate neurotrophin. Binds human NT-3, but not NGF or BDNF. The polypeptide is Putative neurotrophin receptor LTRK 1 (Lymnaea stagnalis (Great pond snail)).